The following is a 118-amino-acid chain: Aspartate 1-decarboxylase 1 (118 aa).

S25 (schiff-base intermediate with substrate; via pyruvic acid) is an active-site residue. S25 is modified (pyruvic acid (Ser)). A substrate-binding site is contributed by T57. The Proton donor role is filled by Y58. Position 73-75 (73-75 (GAA)) interacts with substrate.

This sequence belongs to the PanD family. Heterooctamer of four alpha and four beta subunits. The cofactor is pyruvate. Is synthesized initially as an inactive proenzyme, which is activated by self-cleavage at a specific serine bond to produce a beta-subunit with a hydroxyl group at its C-terminus and an alpha-subunit with a pyruvoyl group at its N-terminus.

Its subcellular location is the cytoplasm. It catalyses the reaction L-aspartate + H(+) = beta-alanine + CO2. Its pathway is cofactor biosynthesis; (R)-pantothenate biosynthesis; beta-alanine from L-aspartate: step 1/1. Catalyzes the pyruvoyl-dependent decarboxylation of aspartate to produce beta-alanine. This Gloeobacter violaceus (strain ATCC 29082 / PCC 7421) protein is Aspartate 1-decarboxylase 1.